Reading from the N-terminus, the 343-residue chain is uncharacterized protein (343 aa).

Belongs to the histone deacetylase family.

Its function is as follows. Putative deacetylase. This is an uncharacterized protein from Methanocaldococcus jannaschii (strain ATCC 43067 / DSM 2661 / JAL-1 / JCM 10045 / NBRC 100440) (Methanococcus jannaschii).